A 178-amino-acid chain; its full sequence is Inorganic pyrophosphatase (178 aa).

Substrate is bound by residues K30, R44, and Y56. Positions 66, 71, and 103 each coordinate Mg(2+). Y142 provides a ligand contact to substrate.

The protein belongs to the PPase family. In terms of assembly, homohexamer. Mg(2+) serves as cofactor.

The protein resides in the cytoplasm. The catalysed reaction is diphosphate + H2O = 2 phosphate + H(+). In terms of biological role, catalyzes the hydrolysis of inorganic pyrophosphate (PPi) forming two phosphate ions. The sequence is that of Inorganic pyrophosphatase from Bradyrhizobium diazoefficiens (strain JCM 10833 / BCRC 13528 / IAM 13628 / NBRC 14792 / USDA 110).